Here is a 116-residue protein sequence, read N- to C-terminus: MKIGVVLVLLTVFVVVMSSTSVSAQSDEDECLKETGQMQLNCFPYLTDNRIHTPSFACCSEVYTVGKTYVDCFCQFINNGGPSFGIVVSQKLLDLPELCGVYGACGNGKNFKNTSL.

The first 24 residues, 1–24 (MKIGVVLVLLTVFVVVMSSTSVSA), serve as a signal peptide directing secretion. Intrachain disulfides connect C31–C74, C42–C58, and C59–C99. Residue N107 is the site of GPI-anchor amidated asparagine attachment. Positions 108–116 (GKNFKNTSL) are cleaved as a propeptide — removed in mature form. N-linked (GlcNAc...) asparagine glycosylation is present at N113.

This sequence belongs to the plant LTP family. In terms of tissue distribution, expressed in seedlings, preferentially in roots.

The protein resides in the cell membrane. Probable lipid transfer protein. This chain is Non-specific lipid transfer protein GPI-anchored 17, found in Arabidopsis thaliana (Mouse-ear cress).